The sequence spans 239 residues: Small ribosomal subunit protein uS2c (239 aa).

It belongs to the universal ribosomal protein uS2 family.

It localises to the plastid. The protein resides in the organellar chromatophore. The polypeptide is Small ribosomal subunit protein uS2c (rps2) (Paulinella chromatophora).